The primary structure comprises 571 residues: Proline--tRNA ligase (571 aa).

The protein belongs to the class-II aminoacyl-tRNA synthetase family. ProS type 1 subfamily. In terms of assembly, homodimer.

It localises to the cytoplasm. The enzyme catalyses tRNA(Pro) + L-proline + ATP = L-prolyl-tRNA(Pro) + AMP + diphosphate. Functionally, catalyzes the attachment of proline to tRNA(Pro) in a two-step reaction: proline is first activated by ATP to form Pro-AMP and then transferred to the acceptor end of tRNA(Pro). As ProRS can inadvertently accommodate and process non-cognate amino acids such as alanine and cysteine, to avoid such errors it has two additional distinct editing activities against alanine. One activity is designated as 'pretransfer' editing and involves the tRNA(Pro)-independent hydrolysis of activated Ala-AMP. The other activity is designated 'posttransfer' editing and involves deacylation of mischarged Ala-tRNA(Pro). The misacylated Cys-tRNA(Pro) is not edited by ProRS. The polypeptide is Proline--tRNA ligase (Pediococcus pentosaceus (strain ATCC 25745 / CCUG 21536 / LMG 10740 / 183-1w)).